Consider the following 271-residue polypeptide: ATP-dependent Clp protease proteolytic subunit 6, chloroplastic (271 aa).

The tract at residues 1-30 (MAGLAISPPLGLSFSSRTRNPKPTSFLSHN) is disordered. The N-terminal 77 residues, 1–77 (MAGLAISPPL…KAPRFGVIEA (77 aa)), are a transit peptide targeting the chloroplast. The span at 13 to 30 (SFSSRTRNPKPTSFLSHN) shows a compositional bias: polar residues. Ser175 functions as the Nucleophile in the catalytic mechanism. The active site involves His200.

The protein belongs to the peptidase S14 family. Component of the chloroplastic Clp protease core complex which consist of at least 16 proteins: CLPP4 (3 copies), CLPP5 (3 copies), CLPR4 (2 copies), ClpP1 (1 copy), CLPP6 (1 copy), CLPR2 (1 copy), CLPT1 (1 copy), CLPT2 (1 copy) and 3 copies of CLPP3 and/or CLPR1 and/or CLPR3. The core complex is organized in two heptameric rings, one containing CLPP3,4,5,6 in a 1:2:3:1 ratio and the other CLPP1 and CLPR1,2,3,4 in a 3:1:1:1:1 ratio. Mostly expressed in leaves. Also detected in stems, and to a lower extent, in roots (at protein level).

The protein resides in the plastid. It is found in the chloroplast stroma. The catalysed reaction is Hydrolysis of proteins to small peptides in the presence of ATP and magnesium. alpha-casein is the usual test substrate. In the absence of ATP, only oligopeptides shorter than five residues are hydrolyzed (such as succinyl-Leu-Tyr-|-NHMec, and Leu-Tyr-Leu-|-Tyr-Trp, in which cleavage of the -Tyr-|-Leu- and -Tyr-|-Trp bonds also occurs).. Its function is as follows. Cleaves peptides in various proteins in a process that requires ATP hydrolysis. Has a chymotrypsin-like activity. Plays a major role in the degradation of misfolded proteins. Essential protein required for chloroplast development and integrity. The polypeptide is ATP-dependent Clp protease proteolytic subunit 6, chloroplastic (Arabidopsis thaliana (Mouse-ear cress)).